A 218-amino-acid chain; its full sequence is UPF0598 protein C8orf82 homolog (218 aa).

It belongs to the UPF0598 family.

The chain is UPF0598 protein C8orf82 homolog from Rattus norvegicus (Rat).